Consider the following 148-residue polypeptide: Lysozyme C (148 aa).

Positions 1 to 18 (MKALIILGLVLLSVMVQA) are cleaved as a signal peptide. The region spanning 19 to 148 (KVFERCELAR…LRQYIQGCGV (130 aa)) is the C-type lysozyme domain. Intrachain disulfides connect C24-C146, C48-C134, C83-C99, and C95-C113. Residues E53 and D71 contribute to the active site.

Belongs to the glycosyl hydrolase 22 family. As to quaternary structure, monomer.

It is found in the secreted. The catalysed reaction is Hydrolysis of (1-&gt;4)-beta-linkages between N-acetylmuramic acid and N-acetyl-D-glucosamine residues in a peptidoglycan and between N-acetyl-D-glucosamine residues in chitodextrins.. Lysozymes have primarily a bacteriolytic function; those in tissues and body fluids are associated with the monocyte-macrophage system and enhance the activity of immunoagents. The protein is Lysozyme C (LYZ) of Hylobates lar (Lar gibbon).